The sequence spans 357 residues: GTPase Obg (357 aa).

The region spanning methionine 1–leucine 159 is the Obg domain. Residues alanine 160 to glutamate 343 enclose the OBG-type G domain. GTP is bound by residues glycine 166 to serine 173, phenylalanine 191 to tyrosine 195, aspartate 213 to glycine 216, asparagine 293 to aspartate 296, and serine 324 to valine 326. Positions 173 and 193 each coordinate Mg(2+).

It belongs to the TRAFAC class OBG-HflX-like GTPase superfamily. OBG GTPase family. In terms of assembly, monomer. Requires Mg(2+) as cofactor.

Its subcellular location is the cytoplasm. Its function is as follows. An essential GTPase which binds GTP, GDP and possibly (p)ppGpp with moderate affinity, with high nucleotide exchange rates and a fairly low GTP hydrolysis rate. Plays a role in control of the cell cycle, stress response, ribosome biogenesis and in those bacteria that undergo differentiation, in morphogenesis control. This Xylella fastidiosa (strain M23) protein is GTPase Obg.